A 99-amino-acid polypeptide reads, in one-letter code: Small ribosomal subunit protein uS14m (99 aa).

This sequence belongs to the universal ribosomal protein uS14 family.

It is found in the mitochondrion. In Oenothera berteroana (Bertero's evening primrose), this protein is Small ribosomal subunit protein uS14m (RPS14).